The primary structure comprises 209 residues: Large ribosomal subunit protein bL25 (209 aa).

Positions 185–209 are disordered; the sequence is SKATTGEEEGAEAAGEGEEAEEKPE. The span at 190–209 shows a compositional bias: acidic residues; sequence GEEEGAEAAGEGEEAEEKPE.

The protein belongs to the bacterial ribosomal protein bL25 family. CTC subfamily. As to quaternary structure, part of the 50S ribosomal subunit; part of the 5S rRNA/L5/L18/L25 subcomplex. Contacts the 5S rRNA. Binds to the 5S rRNA independently of L5 and L18.

Functionally, this is one of the proteins that binds to the 5S RNA in the ribosome where it forms part of the central protuberance. This Syntrophomonas wolfei subsp. wolfei (strain DSM 2245B / Goettingen) protein is Large ribosomal subunit protein bL25.